The primary structure comprises 179 residues: Large ribosomal subunit protein uL5 (179 aa).

This sequence belongs to the universal ribosomal protein uL5 family. In terms of assembly, part of the 50S ribosomal subunit; part of the 5S rRNA/L5/L18/L25 subcomplex. Contacts the 5S rRNA and the P site tRNA. Forms a bridge to the 30S subunit in the 70S ribosome.

Functionally, this is one of the proteins that bind and probably mediate the attachment of the 5S RNA into the large ribosomal subunit, where it forms part of the central protuberance. In the 70S ribosome it contacts protein S13 of the 30S subunit (bridge B1b), connecting the 2 subunits; this bridge is implicated in subunit movement. Contacts the P site tRNA; the 5S rRNA and some of its associated proteins might help stabilize positioning of ribosome-bound tRNAs. The sequence is that of Large ribosomal subunit protein uL5 from Rickettsia akari (strain Hartford).